A 134-amino-acid chain; its full sequence is D-ribose pyranase (134 aa).

The Proton donor role is filled by His20. Substrate contacts are provided by residues Asp28, His101, and 123-125 (YCN).

This sequence belongs to the RbsD / FucU family. RbsD subfamily. Homodecamer.

The protein localises to the cytoplasm. The enzyme catalyses beta-D-ribopyranose = beta-D-ribofuranose. It participates in carbohydrate metabolism; D-ribose degradation; D-ribose 5-phosphate from beta-D-ribopyranose: step 1/2. In terms of biological role, catalyzes the interconversion of beta-pyran and beta-furan forms of D-ribose. This is D-ribose pyranase from Pseudomonas fluorescens (strain Pf0-1).